A 420-amino-acid chain; its full sequence is Tyrosine--tRNA ligase 2 (420 aa).

Tyrosine 34 provides a ligand contact to L-tyrosine. A 'HIGH' region motif is present at residues 39 to 48 (PTGDSMHIGH). Residues tyrosine 168 and glutamine 172 each contribute to the L-tyrosine site. Positions 230–234 (KFGKS) match the 'KMSKS' region motif. Lysine 233 contacts ATP. The region spanning 352–418 (KNIVEWLVDL…GKKNYSLVKL (67 aa)) is the S4 RNA-binding domain.

It belongs to the class-I aminoacyl-tRNA synthetase family. TyrS type 1 subfamily. Homodimer.

The protein resides in the cytoplasm. It carries out the reaction tRNA(Tyr) + L-tyrosine + ATP = L-tyrosyl-tRNA(Tyr) + AMP + diphosphate + H(+). In terms of biological role, catalyzes the attachment of tyrosine to tRNA(Tyr) in a two-step reaction: tyrosine is first activated by ATP to form Tyr-AMP and then transferred to the acceptor end of tRNA(Tyr). This Bacillus cereus (strain ATCC 14579 / DSM 31 / CCUG 7414 / JCM 2152 / NBRC 15305 / NCIMB 9373 / NCTC 2599 / NRRL B-3711) protein is Tyrosine--tRNA ligase 2.